The primary structure comprises 353 residues: Spermidine/putrescine import ATP-binding protein PotA (353 aa).

Residues 7–237 (IRFERVTKEY…PINRFVADFI (231 aa)) enclose the ABC transporter domain. ATP is bound at residue 39 to 46 (GPSGCGKT).

The protein belongs to the ABC transporter superfamily. Spermidine/putrescine importer (TC 3.A.1.11.1) family. In terms of assembly, the complex is composed of two ATP-binding proteins (PotA), two transmembrane proteins (PotB and PotC) and a solute-binding protein (PotD).

The protein localises to the cell membrane. It catalyses the reaction ATP + H2O + polyamine-[polyamine-binding protein]Side 1 = ADP + phosphate + polyamineSide 2 + [polyamine-binding protein]Side 1.. In terms of biological role, part of the ABC transporter complex PotABCD involved in spermidine/putrescine import. Responsible for energy coupling to the transport system. The protein is Spermidine/putrescine import ATP-binding protein PotA of Geobacillus kaustophilus (strain HTA426).